The sequence spans 247 residues: tRNA uridine(34) hydroxylase (247 aa).

The region spanning 124-218 (TKQDVIVIDT…YLEDTQNKNN (95 aa)) is the Rhodanese domain. The active-site Cysteine persulfide intermediate is the C178.

Belongs to the TrhO family.

The catalysed reaction is uridine(34) in tRNA + AH2 + O2 = 5-hydroxyuridine(34) in tRNA + A + H2O. Functionally, catalyzes oxygen-dependent 5-hydroxyuridine (ho5U) modification at position 34 in tRNAs. This chain is tRNA uridine(34) hydroxylase, found in Rickettsia massiliae (strain Mtu5).